The following is a 432-amino-acid chain: Teosinte glume architecture 1 (432 aa).

2 disordered regions span residues 20–55 (HAAA…GAPA) and 68–102 (ECEP…QQQC). Residues 22–41 (AAAPSSGGHAANAAAAGTGT) are compositionally biased toward low complexity. The SBP-type zinc-finger motif lies at 102–179 (CPSCAVDGCR…DGHNRRRRKP (78 aa)). Zn(2+) contacts are provided by Cys105, Cys110, Cys127, His130, Cys146, Cys149, His153, and Cys165. The segment covering 409-420 (GGGSGGGEGSSD) has biased composition (gly residues). Residues 409-432 (GGGSGGGEGSSDGGTSSSMPFSWQ) are disordered.

As to quaternary structure, monomer and homodimer. Strongly expressed in immature ears and weakly in husks. Found in the inflorescence meristem of the developing ear, in the spikelet pair primordia, the glume primordia, the cupule forming region and other floral organs. Not detected in other tissues.

Its function is as follows. SBP transcriptional regulator probably involved in the domestication of maize. Acts as a transcriptional repressor binding to a 5'-GTAC-3' motif. May repress the growth of lateral branches in length and numbers. The chain is Teosinte glume architecture 1 from Zea mays (Maize).